Reading from the N-terminus, the 120-residue chain is Crustacean hyperglycemic hormones 4 (120 aa).

A signal peptide spans Met1–Ala26. Disulfide bonds link Cys53–Cys89, Cys69–Cys85, and Cys72–Cys98. At Val118 the chain carries Valine amide.

This sequence belongs to the arthropod CHH/MIH/GIH/VIH hormone family.

It is found in the secreted. Hormone found in the sinus gland of isopods and decapods which controls the blood sugar level. Has a secretagogue action over the amylase released from the midgut gland. May act as a stress hormone and may be involved in the control of molting and reproduction. The sequence is that of Crustacean hyperglycemic hormones 4 (CHH4) from Penaeus monodon (Giant tiger prawn).